The sequence spans 335 residues: Deoxyhypusine hydroxylase (335 aa).

HEAT-like PBS-type repeat units lie at residues 74–100, 107–133, 203–233, 241–267, and 274–301; these read LKHE…VLED, CRHE…LRDD, KRYR…LAEG, FRHE…TLSD, and VRHE…FVND. The Fe cation site is built by His76, Glu77, His109, and Glu110. Fe cation-binding residues include His243, Glu244, His276, and Glu277.

Belongs to the deoxyhypusine hydroxylase family. Fe(2+) serves as cofactor.

The protein localises to the cytoplasm. It localises to the nucleus. The catalysed reaction is [eIF5A protein]-deoxyhypusine + AH2 + O2 = [eIF5A protein]-hypusine + A + H2O. Its pathway is protein modification; eIF5A hypusination. In terms of biological role, catalyzes the hydroxylation of the N(6)-(4-aminobutyl)-L-lysine intermediate to form hypusine, an essential post-translational modification only found in mature eIF-5A factor. The sequence is that of Deoxyhypusine hydroxylase from Coccidioides immitis (strain RS) (Valley fever fungus).